The chain runs to 118 residues: 5-hydroxyisourate hydrolase (118 aa).

Residues histidine 7, arginine 46, and tyrosine 115 each contribute to the substrate site.

This sequence belongs to the transthyretin family. 5-hydroxyisourate hydrolase subfamily. Homotetramer.

It catalyses the reaction 5-hydroxyisourate + H2O = 5-hydroxy-2-oxo-4-ureido-2,5-dihydro-1H-imidazole-5-carboxylate + H(+). Functionally, catalyzes the hydrolysis of 5-hydroxyisourate (HIU) to 2-oxo-4-hydroxy-4-carboxy-5-ureidoimidazoline (OHCU). This is 5-hydroxyisourate hydrolase from Brucella melitensis biotype 1 (strain ATCC 23456 / CCUG 17765 / NCTC 10094 / 16M).